An 837-amino-acid polypeptide reads, in one-letter code: AdoMet-dependent rRNA methyltransferase SPB1 (837 aa).

Positions 58, 60, 78, 94, and 119 each coordinate S-adenosyl-L-methionine. The active-site Proton acceptor is the Lys159. Positions 345–390 (LNEEEQIEKELRDLQEKQKQKQKREKRRKNEEKQKELTRMQMNMLT) form a coiled coil. 4 disordered regions span residues 359–381 (QEKQ…QKEL), 483–529 (FRAK…DEDD), 573–644 (TDDV…TTKE), and 779–808 (TKKQ…KGIK). The span at 372–381 (RKNEEKQKEL) shows a compositional bias: basic and acidic residues. The segment covering 518–529 (ESDDSELSDEDD) has biased composition (acidic residues). Residues 593-602 (SYNEMKKEDL) are compositionally biased toward basic and acidic residues. The span at 603–635 (SDSSDEDSSSESDFEIVANDESDGDIDSDYDSD) shows a compositional bias: acidic residues.

It belongs to the class I-like SAM-binding methyltransferase superfamily. RNA methyltransferase RlmE family. SPB1 subfamily. As to quaternary structure, component of the nucleolar and nucleoplasmic pre-60S ribosomal particle.

It localises to the nucleus. Its subcellular location is the nucleolus. The enzyme catalyses a ribonucleotide in rRNA + S-adenosyl-L-methionine = a 2'-O-methylribonucleotide in rRNA + S-adenosyl-L-homocysteine + H(+). Its function is as follows. Required for proper assembly of pre-ribosomal particles during the biogenesis of the 60S ribosomal subunit. The chain is AdoMet-dependent rRNA methyltransferase SPB1 from Candida glabrata (strain ATCC 2001 / BCRC 20586 / JCM 3761 / NBRC 0622 / NRRL Y-65 / CBS 138) (Yeast).